A 208-amino-acid chain; its full sequence is High frequency lysogenization protein HflD homolog (208 aa).

This sequence belongs to the HflD family.

The protein resides in the cytoplasm. It localises to the cell inner membrane. This chain is High frequency lysogenization protein HflD homolog, found in Pseudomonas putida (strain ATCC 700007 / DSM 6899 / JCM 31910 / BCRC 17059 / LMG 24140 / F1).